Consider the following 284-residue polypeptide: Phosphoribosylaminoimidazole-succinocarboxamide synthase (284 aa).

It belongs to the SAICAR synthetase family.

The enzyme catalyses 5-amino-1-(5-phospho-D-ribosyl)imidazole-4-carboxylate + L-aspartate + ATP = (2S)-2-[5-amino-1-(5-phospho-beta-D-ribosyl)imidazole-4-carboxamido]succinate + ADP + phosphate + 2 H(+). Its pathway is purine metabolism; IMP biosynthesis via de novo pathway; 5-amino-1-(5-phospho-D-ribosyl)imidazole-4-carboxamide from 5-amino-1-(5-phospho-D-ribosyl)imidazole-4-carboxylate: step 1/2. In Chromobacterium violaceum (strain ATCC 12472 / DSM 30191 / JCM 1249 / CCUG 213 / NBRC 12614 / NCIMB 9131 / NCTC 9757 / MK), this protein is Phosphoribosylaminoimidazole-succinocarboxamide synthase.